Reading from the N-terminus, the 196-residue chain is Large ribosomal subunit protein eL15 (196 aa).

Over residues 162-172 the composition is skewed to basic residues; that stretch reads RGKTSAGRRAR. Positions 162-196 are disordered; it reads RGKTSAGRRARGLQNRGKGTEGLRPSTNADKRNKS.

It belongs to the eukaryotic ribosomal protein eL15 family.

The polypeptide is Large ribosomal subunit protein eL15 (Halobacterium salinarum (strain ATCC 29341 / DSM 671 / R1)).